Here is a 778-residue protein sequence, read N- to C-terminus: Aerobic respiration control sensor protein ArcB (778 aa).

The Cytoplasmic segment spans residues 1 to 25; that stretch reads MKQIRLLAQYYVDLMMKLGLVRFSM. Residues 26–46 traverse the membrane as a helical segment; that stretch reads LLALALVVLAIVVQMAVTMVL. The Periplasmic portion of the chain corresponds to 47 to 57; the sequence is HGQVESIDVIR. A helical transmembrane segment spans residues 58–78; it reads SIFFGLLITPWAVYFLSVVVE. At 79-778 the chain is on the cytoplasmic side; the sequence is QLEESRQRLS…KAWVAKATKK (700 aa). Residues 153-223 enclose the PAS domain; it reads QSSFLRSFLD…ETDEKVFRHN (71 aa). The PAC domain maps to 226 to 278; it reads LTYEQWLDYPDGRKACFEIRKVPYYDRVGKRHGLMGFGRDITERKRYQDALER. The 219-residue stretch at 289–507 folds into the Histidine kinase domain; that stretch reads TISHELRTPL…TFTLTIHAPS (219 aa). His-292 bears the Phosphohistidine; by autocatalysis mark. The Response regulatory domain occupies 527-643; the sequence is NVLLVEDIEL…ALTAMIKKFW (117 aa). A 4-aspartylphosphate modification is found at Asp-576. Positions 678 to 771 constitute an HPt domain; it reads GPKLITDGLA…RHDVEVLKAW (94 aa). Residue His-717 is modified to Phosphohistidine.

In terms of processing, activation requires a sequential transfer of a phosphate group from a His in the primary transmitter domain, to an Asp in the receiver domain and to a His in the secondary transmitter domain.

The protein resides in the cell inner membrane. The catalysed reaction is ATP + protein L-histidine = ADP + protein N-phospho-L-histidine.. Member of the two-component regulatory system ArcB/ArcA. Sensor-regulator protein for anaerobic repression of the arc modulon. Activates ArcA via a four-step phosphorelay. ArcB can also dephosphorylate ArcA by a reverse phosphorelay involving His-717 and Asp-576. The chain is Aerobic respiration control sensor protein ArcB (arcB) from Escherichia coli O157:H7.